We begin with the raw amino-acid sequence, 197 residues long: Phospholipid hydroperoxide glutathione peroxidase (197 aa).

Position 40 is a phosphoserine (Ser40). Residue Sec73 is part of the active site. Residue Sec73 is a non-standard amino acid, selenocysteine.

This sequence belongs to the glutathione peroxidase family. In terms of assembly, monomer. Has a tendency to form higher mass oligomers. Interacts with FUNDC1; this interaction promotes GPX4 recruitment into mitochondria through TOM/TIM complex where it is degraded by mitophagy. As to expression, expressed in testis. Also expressed in liver, lung, kidney and spinal cord.

Its subcellular location is the mitochondrion. It is found in the cytoplasm. It catalyses the reaction a hydroperoxy polyunsaturated fatty acid + 2 glutathione = a hydroxy polyunsaturated fatty acid + glutathione disulfide + H2O. The catalysed reaction is 2 glutathione + H2O2 = glutathione disulfide + 2 H2O. The enzyme catalyses tert-butyl hydroperoxide + 2 glutathione = tert-butanol + glutathione disulfide + H2O. It carries out the reaction cumene hydroperoxide + 2 glutathione = 2-phenylpropan-2-ol + glutathione disulfide + H2O. It catalyses the reaction (9S)-hydroperoxy-(10E,12Z)-octadecadienoate + 2 glutathione = (9S)-hydroxy-(10E,12Z)-octadecadienoate + glutathione disulfide + H2O. The catalysed reaction is (13S)-hydroperoxy-(9Z,11E)-octadecadienoate + 2 glutathione = (13S)-hydroxy-(9Z,11E)-octadecadienoate + glutathione disulfide + H2O. The enzyme catalyses (5S)-hydroperoxy-(6E,8Z,11Z,14Z)-eicosatetraenoate + 2 glutathione = (5S)-hydroxy-(6E,8Z,11Z,14Z)-eicosatetraenoate + glutathione disulfide + H2O. It carries out the reaction (12R)-hydroperoxy-(5Z,8Z,10E,14Z)-eicosatetraenoate + 2 glutathione = (12R)-hydroxy-(5Z,8Z,10E,14Z)-eicosatetraenoate + glutathione disulfide + H2O. It catalyses the reaction (12S)-hydroperoxy-(5Z,8Z,10E,14Z)-eicosatetraenoate + 2 glutathione = (12S)-hydroxy-(5Z,8Z,10E,14Z)-eicosatetraenoate + glutathione disulfide + H2O. The catalysed reaction is (15S)-hydroperoxy-(5Z,8Z,11Z,13E)-eicosatetraenoate + 2 glutathione = (15S)-hydroxy-(5Z,8Z,11Z,13E)-eicosatetraenoate + glutathione disulfide + H2O. The enzyme catalyses (5S)-hydroperoxy-(6E,8Z,11Z,14Z,17Z)-eicosapentaenoate + 2 glutathione = (5S)-hydroxy-(6E,8Z,11Z,14Z,17Z)-eicosapentaenoate + glutathione disulfide + H2O. It carries out the reaction (12S)-hydroperoxy-(5Z,8Z,10E,14Z,17Z)-eicosapentaenoate + 2 glutathione = (12S)-hydroxy-(5Z,8Z,10E,14Z,17Z)-eicosapentaenoate + glutathione disulfide + H2O. It catalyses the reaction (15S)-hydroperoxy-(5Z,8Z,11Z,13E,17Z)-eicosapentaenoate + 2 glutathione = (15S)-hydroxy-(5Z,8Z,11Z,13E,17Z)-eicosapentaenoate + glutathione disulfide + H2O. The catalysed reaction is (15S)-hydroperoxy-(11Z,13E)-eicosadienoate + 2 glutathione = (15S)-hydroxy-(11Z,13E)-eicosadienoate + glutathione disulfide + H2O. The enzyme catalyses (17S)-hydroperoxy-(4Z,7Z,10Z,13Z,15E,19Z)-docosahexaenoate + 2 glutathione = (17S)-hydroxy-(4Z,7Z,10Z,13Z,15E,19Z)-docosahexaenoate + glutathione disulfide + H2O. It carries out the reaction a hydroperoxy-1,2-diacyl-glycero-3-phosphocholine + 2 glutathione = a hydroxy-1,2-diacyl-glycero-3-phosphocholine + glutathione disulfide + H2O. In terms of biological role, essential antioxidant peroxidase that directly reduces phospholipid hydroperoxide even if they are incorporated in membranes and lipoproteins. Can also reduce fatty acid hydroperoxide, cholesterol hydroperoxide and thymine hydroperoxide. Plays a key role in protecting cells from oxidative damage by preventing membrane lipid peroxidation. Required to prevent cells from ferroptosis, a non-apoptotic cell death resulting from an iron-dependent accumulation of lipid reactive oxygen species. The presence of selenocysteine (Sec) versus Cys at the active site is essential for life: it provides resistance to overoxidation and prevents cells against ferroptosis. The presence of Sec at the active site is also essential for the survival of a specific type of parvalbumin-positive interneurons, thereby preventing against fatal epileptic seizures. May be required to protect cells from the toxicity of ingested lipid hydroperoxides. Required for normal sperm development and male fertility. Essential for maturation and survival of photoreceptor cells. Plays a role in a primary T-cell response to viral and parasitic infection by protecting T-cells from ferroptosis and by supporting T-cell expansion. Plays a role of glutathione peroxidase in platelets in the arachidonic acid metabolism. Reduces hydroperoxy ester lipids formed by a 15-lipoxygenase that may play a role as down-regulator of the cellular 15-lipoxygenase pathway. Can also reduce small soluble hydroperoxides such as H2O2, cumene hydroperoxide and tert-butyl hydroperoxide. This is Phospholipid hydroperoxide glutathione peroxidase from Callithrix jacchus (White-tufted-ear marmoset).